A 118-amino-acid polypeptide reads, in one-letter code: Protein MGF 110-6L (118 aa).

An N-terminal signal peptide occupies residues 1-18 (MLVIFLGILGLLASQVSS). The N-linked (GlcNAc...) asparagine; by host glycan is linked to Asn-96. The Prevents secretion from ER signature appears at 115–118 (KDEL).

Belongs to the asfivirus MGF 110 family. N-glycosylated.

Its subcellular location is the host endoplasmic reticulum lumen. Plays a role in virus cell tropism, and may be required for efficient virus replication in macrophages. The polypeptide is Protein MGF 110-6L (African swine fever virus (strain Badajoz 1971 Vero-adapted) (Ba71V)).